Consider the following 137-residue polypeptide: Nucleoside diphosphate kinase (137 aa).

ATP contacts are provided by Lys9, Phe57, Arg85, Thr91, Arg102, and Asn112. His115 serves as the catalytic Pros-phosphohistidine intermediate.

It belongs to the NDK family. Homotetramer. Mg(2+) serves as cofactor.

It localises to the cytoplasm. The catalysed reaction is a 2'-deoxyribonucleoside 5'-diphosphate + ATP = a 2'-deoxyribonucleoside 5'-triphosphate + ADP. It catalyses the reaction a ribonucleoside 5'-diphosphate + ATP = a ribonucleoside 5'-triphosphate + ADP. Its function is as follows. Major role in the synthesis of nucleoside triphosphates other than ATP. The ATP gamma phosphate is transferred to the NDP beta phosphate via a ping-pong mechanism, using a phosphorylated active-site intermediate. This Geobacter sp. (strain M21) protein is Nucleoside diphosphate kinase.